Here is a 483-residue protein sequence, read N- to C-terminus: tRNA-2-methylthio-N(6)-dimethylallyladenosine synthase (483 aa).

Residues 31–148 (KKLYIETQGC…LPQMLDQHQD (118 aa)) form the MTTase N-terminal domain. Positions 40, 77, 111, 192, 196, and 199 each coordinate [4Fe-4S] cluster. The 233-residue stretch at 178–410 (RVEGFKAFVS…QHWIKQSSIR (233 aa)) folds into the Radical SAM core domain. In terms of domain architecture, TRAM spans 413–477 (DAMQGTIQRV…LNLVYGELLN (65 aa)).

It belongs to the methylthiotransferase family. MiaB subfamily. In terms of assembly, monomer. Requires [4Fe-4S] cluster as cofactor.

Its subcellular location is the cytoplasm. It catalyses the reaction N(6)-dimethylallyladenosine(37) in tRNA + (sulfur carrier)-SH + AH2 + 2 S-adenosyl-L-methionine = 2-methylsulfanyl-N(6)-dimethylallyladenosine(37) in tRNA + (sulfur carrier)-H + 5'-deoxyadenosine + L-methionine + A + S-adenosyl-L-homocysteine + 2 H(+). Functionally, catalyzes the methylthiolation of N6-(dimethylallyl)adenosine (i(6)A), leading to the formation of 2-methylthio-N6-(dimethylallyl)adenosine (ms(2)i(6)A) at position 37 in tRNAs that read codons beginning with uridine. The sequence is that of tRNA-2-methylthio-N(6)-dimethylallyladenosine synthase from Acinetobacter baylyi (strain ATCC 33305 / BD413 / ADP1).